Here is a 137-residue protein sequence, read N- to C-terminus: Small ribosomal subunit protein uS9 (137 aa).

The span at 106-117 (KTEGYLTRDPRA) shows a compositional bias: basic and acidic residues. Positions 106–137 (KTEGYLTRDPRAKERRKYGLRKARKAPQYSKR) are disordered. A compositionally biased stretch (basic residues) spans 118-137 (KERRKYGLRKARKAPQYSKR).

This sequence belongs to the universal ribosomal protein uS9 family.

This Thermosynechococcus vestitus (strain NIES-2133 / IAM M-273 / BP-1) protein is Small ribosomal subunit protein uS9.